A 276-amino-acid chain; its full sequence is Putative olfactory receptor 10J6 (276 aa).

Residues 1–25 lie on the Extracellular side of the membrane; the sequence is MRRKNLTEVTEFVFLGFSRFHKHHI. N5 carries N-linked (GlcNAc...) asparagine glycosylation. Residues 26–46 form a helical membrane-spanning segment; that stretch reads TLFVVFLILYTLTVAGNAIIM. Topologically, residues 47-54 are cytoplasmic; that stretch reads TIICIDRH. A helical membrane pass occupies residues 55–75; that stretch reads LHTPMYFFLSMLASSKTVYTL. Residues 76–99 lie on the Extracellular side of the membrane; it reads FIIPQMLSSFVTQTQPISLAGCTT. The cysteines at positions 97 and 188 are disulfide-linked. The chain crosses the membrane as a helical span at residues 100-120; it reads QTFFFVTLAINNCFLLTVMGY. Residues 121 to 139 lie on the Cytoplasmic side of the membrane; sequence DHYMAICNPLRYRVITSKK. The chain crosses the membrane as a helical span at residues 140 to 160; sequence VCVQLVCGAFSIGLAMAAVQV. At 161-196 the chain is on the extracellular side; it reads TSIFTLPFCHTVVGHFFCDILPVMKLSCINTTINEI. N190 is a glycosylation site (N-linked (GlcNAc...) asparagine). The chain crosses the membrane as a helical span at residues 197–216; sequence INFVVRLFVILVPMGLVFIS. Residues 217-236 are Cytoplasmic-facing; the sequence is YVLIISTVLKIASAEGWKKT. Residues 237-257 traverse the membrane as a helical segment; that stretch reads FATCAFHLTVVIVHYGCASIA. Residues 258–270 are Extracellular-facing; sequence YLMPKSENSIEQD. A helical membrane pass occupies residues 271 to 276; that stretch reads LLLSVT.

The protein belongs to the G-protein coupled receptor 1 family.

Its subcellular location is the cell membrane. Odorant receptor. The polypeptide is Putative olfactory receptor 10J6 (OR10J6P) (Homo sapiens (Human)).